A 160-amino-acid polypeptide reads, in one-letter code: Transcription elongation factor GreA 2 (160 aa).

Residues 9-73 (MTEEGKVKLE…RIKTVEHMLQ (65 aa)) adopt a coiled-coil conformation.

This sequence belongs to the GreA/GreB family.

Necessary for efficient RNA polymerase transcription elongation past template-encoded arresting sites. The arresting sites in DNA have the property of trapping a certain fraction of elongating RNA polymerases that pass through, resulting in locked ternary complexes. Cleavage of the nascent transcript by cleavage factors such as GreA or GreB allows the resumption of elongation from the new 3'terminus. GreA releases sequences of 2 to 3 nucleotides. This is Transcription elongation factor GreA 2 from Lactiplantibacillus plantarum (strain ATCC BAA-793 / NCIMB 8826 / WCFS1) (Lactobacillus plantarum).